The sequence spans 174 residues: Translation initiation factor IF-3 (174 aa).

It belongs to the IF-3 family. As to quaternary structure, monomer.

Its subcellular location is the cytoplasm. IF-3 binds to the 30S ribosomal subunit and shifts the equilibrium between 70S ribosomes and their 50S and 30S subunits in favor of the free subunits, thus enhancing the availability of 30S subunits on which protein synthesis initiation begins. The sequence is that of Translation initiation factor IF-3 from Xanthobacter autotrophicus (strain ATCC BAA-1158 / Py2).